A 63-amino-acid chain; its full sequence is Prokaryotic ubiquitin-like protein Pup (63 aa).

Positions 1 to 11 (MAQEQTRRGGG) are enriched in basic and acidic residues. The disordered stretch occupies residues 1–36 (MAQEQTRRGGGGDDDEFTSSTSVGQERREKLTEETD). The tract at residues 20–57 (STSVGQERREKLTEETDDLLDEIDDVLEENAEDFVRAY) is ARC ATPase binding. Positions 23-51 (VGQERREKLTEETDDLLDEIDDVLEENAE) form a coiled coil. Gln-63 is modified (deamidated glutamine). An Isoglutamyl lysine isopeptide (Gln-Lys) (interchain with K-? in acceptor proteins) cross-link involves residue Gln-63.

Belongs to the prokaryotic ubiquitin-like protein family. In terms of assembly, strongly interacts with the proteasome-associated ATPase ARC through a hydrophobic interface; the interacting region of Pup lies in its C-terminal half. There is one Pup binding site per ARC hexamer ring. Is modified by deamidation of its C-terminal glutamine to glutamate by the deamidase Dop, a prerequisite to the subsequent pupylation process.

Its pathway is protein degradation; proteasomal Pup-dependent pathway. Functionally, protein modifier that is covalently attached to lysine residues of substrate proteins, thereby targeting them for proteasomal degradation. The tagging system is termed pupylation. This chain is Prokaryotic ubiquitin-like protein Pup, found in Mycobacterium leprae (strain Br4923).